Reading from the N-terminus, the 79-residue chain is D-alanyl carrier protein (79 aa).

One can recognise a Carrier domain in the interval 1 to 77 (MDIKAEVIEI…KIVEGVTELR (77 aa)). Ser-35 is modified (O-(pantetheine 4'-phosphoryl)serine).

Belongs to the DltC family. In terms of processing, 4'-phosphopantetheine is transferred from CoA to a specific serine of apo-DCP.

It is found in the cytoplasm. The protein operates within cell wall biogenesis; lipoteichoic acid biosynthesis. Functionally, carrier protein involved in the D-alanylation of lipoteichoic acid (LTA). The loading of thioester-linked D-alanine onto DltC is catalyzed by D-alanine--D-alanyl carrier protein ligase DltA. The DltC-carried D-alanyl group is further transferred to cell membrane phosphatidylglycerol (PG) by forming an ester bond, probably catalyzed by DltD. D-alanylation of LTA plays an important role in modulating the properties of the cell wall in Gram-positive bacteria, influencing the net charge of the cell wall. The sequence is that of D-alanyl carrier protein from Streptococcus sanguinis (strain SK36).